The primary structure comprises 315 residues: Methionyl-tRNA formyltransferase (315 aa).

The interval 2–189 (SESLRIIFAG…LITTLKQLAD (188 aa)) is N-terminal domain. 113–116 (SLLP) contributes to the (6S)-5,6,7,8-tetrahydrofolate binding site. Positions 210-315 (KEEARIDWSL…EWFVPGNRLV (106 aa)) are C-terminal domain.

This sequence belongs to the Fmt family. As to quaternary structure, monomer.

The catalysed reaction is L-methionyl-tRNA(fMet) + (6R)-10-formyltetrahydrofolate = N-formyl-L-methionyl-tRNA(fMet) + (6S)-5,6,7,8-tetrahydrofolate + H(+). With respect to regulation, activity is optimum in the presence of Mg(2+) and K(+). Its function is as follows. Attaches a formyl group to the free amino group of methionyl-tRNA(fMet). The formyl group appears to play a dual role in the initiator identity of N-formylmethionyl-tRNA by promoting its recognition by IF2 and preventing the misappropriation of this tRNA by the elongation apparatus. This is Methionyl-tRNA formyltransferase from Escherichia coli (strain K12).